We begin with the raw amino-acid sequence, 86 residues long: Large ribosomal subunit protein bL28 (86 aa).

Belongs to the bacterial ribosomal protein bL28 family.

This is Large ribosomal subunit protein bL28 from Bacteroides fragilis (strain ATCC 25285 / DSM 2151 / CCUG 4856 / JCM 11019 / LMG 10263 / NCTC 9343 / Onslow / VPI 2553 / EN-2).